A 140-amino-acid polypeptide reads, in one-letter code: Phosphoribosyl-AMP cyclohydrolase (140 aa).

Asp78 contacts Mg(2+). Cys79 serves as a coordination point for Zn(2+). Asp80 and Asp82 together coordinate Mg(2+). Residues Cys96 and Cys103 each contribute to the Zn(2+) site.

The protein belongs to the PRA-CH family. Homodimer. It depends on Mg(2+) as a cofactor. The cofactor is Zn(2+).

It localises to the cytoplasm. It catalyses the reaction 1-(5-phospho-beta-D-ribosyl)-5'-AMP + H2O = 1-(5-phospho-beta-D-ribosyl)-5-[(5-phospho-beta-D-ribosylamino)methylideneamino]imidazole-4-carboxamide. Its pathway is amino-acid biosynthesis; L-histidine biosynthesis; L-histidine from 5-phospho-alpha-D-ribose 1-diphosphate: step 3/9. In terms of biological role, catalyzes the hydrolysis of the adenine ring of phosphoribosyl-AMP. This is Phosphoribosyl-AMP cyclohydrolase from Ralstonia nicotianae (strain ATCC BAA-1114 / GMI1000) (Ralstonia solanacearum).